Here is an 843-residue protein sequence, read N- to C-terminus: Protein translocase subunit SecA (843 aa).

ATP is bound by residues Gln-85, 103-107, and Asp-490; that span reads GEGKT. Positions 799–834 are disordered; sequence KNAVENRSDDSLPKQPVKAEPRVGRNDPCPCGSGKK. The segment covering 802-823 has biased composition (basic and acidic residues); the sequence is VENRSDDSLPKQPVKAEPRVGR. Zn(2+) contacts are provided by Cys-827, Cys-829, Cys-838, and Cys-839.

The protein belongs to the SecA family. Monomer and homodimer. Part of the essential Sec protein translocation apparatus which comprises SecA, SecYEG and auxiliary proteins SecDF. Other proteins may also be involved. Requires Zn(2+) as cofactor.

It is found in the cell membrane. Its subcellular location is the cytoplasm. The catalysed reaction is ATP + H2O + cellular proteinSide 1 = ADP + phosphate + cellular proteinSide 2.. Part of the Sec protein translocase complex. Interacts with the SecYEG preprotein conducting channel. Has a central role in coupling the hydrolysis of ATP to the transfer of proteins into and across the cell membrane, serving as an ATP-driven molecular motor driving the stepwise translocation of polypeptide chains across the membrane. The chain is Protein translocase subunit SecA from Heliobacterium modesticaldum (strain ATCC 51547 / Ice1).